A 727-amino-acid chain; its full sequence is Glycerol-3-phosphate dehydrogenase, mitochondrial (727 aa).

The N-terminal 42 residues, 1-42, are a transit peptide targeting the mitochondrion; that stretch reads MAFQKAVKRTVLVCGGALATVLGLSQCSHYRRKQVNLACLKA. 71–99 lines the FAD pocket; sequence DILVIGGGATGSGCALDAVTRGLKTALVE. Tyr601 carries the post-translational modification Phosphotyrosine. EF-hand domains lie at 623–658 and 659–694; these read SDIE…INVK and IDEN…IQKG. Ca(2+)-binding residues include Asp672, Asn674, Asn676, Gln678, and Glu683.

This sequence belongs to the FAD-dependent glycerol-3-phosphate dehydrogenase family. It depends on FAD as a cofactor.

The protein resides in the mitochondrion. It carries out the reaction a quinone + sn-glycerol 3-phosphate = dihydroxyacetone phosphate + a quinol. The protein operates within polyol metabolism; glycerol degradation via glycerol kinase pathway; glycerone phosphate from sn-glycerol 3-phosphate (aerobic route): step 1/1. With respect to regulation, calcium-binding enhance the activity of the enzyme. In terms of biological role, calcium-responsive mitochondrial glycerol-3-phosphate dehydrogenase which seems to be a key component of the pancreatic beta-cell glucose-sensing device. This chain is Glycerol-3-phosphate dehydrogenase, mitochondrial (GPD2), found in Mesocricetus auratus (Golden hamster).